The sequence spans 440 residues: UDP-N-acetylmuramoylalanine--D-glutamate ligase (440 aa).

Gly115–Thr121 provides a ligand contact to ATP.

Belongs to the MurCDEF family.

It is found in the cytoplasm. It catalyses the reaction UDP-N-acetyl-alpha-D-muramoyl-L-alanine + D-glutamate + ATP = UDP-N-acetyl-alpha-D-muramoyl-L-alanyl-D-glutamate + ADP + phosphate + H(+). It functions in the pathway cell wall biogenesis; peptidoglycan biosynthesis. In terms of biological role, cell wall formation. Catalyzes the addition of glutamate to the nucleotide precursor UDP-N-acetylmuramoyl-L-alanine (UMA). The polypeptide is UDP-N-acetylmuramoylalanine--D-glutamate ligase (Aliivibrio fischeri (strain ATCC 700601 / ES114) (Vibrio fischeri)).